We begin with the raw amino-acid sequence, 248 residues long: Trihelix transcription factor ENAP2 (248 aa).

Residues 1–13 (METTTPQSKSSVS) are compositionally biased toward polar residues. The interval 1 to 20 (METTTPQSKSSVSHRPPLGR) is disordered. Positions 24–113 (WSEEATATLV…RLDVLIGPVV (90 aa)) form a DNA-binding region, MADF. The short motif at 69-76 (RKKTDLQC) is the Nuclear localization signal element. Residues 123–150 (SAPFKNHLNPTGSNSTGSSLEDDDEDDD) are disordered. Over residues 130-141 (LNPTGSNSTGSS) the composition is skewed to polar residues. A coiled-coil region spans residues 190 to 210 (YERIEGKKQQMMIELEKQRME).

Interacts with the Agrobacterium tumefaciens virulence protein F (VirF) in the nucleus. Binds to EIN2 C-terminal region in the presence of ethylene.

Its subcellular location is the nucleus. It is found in the nucleoplasm. Its function is as follows. Probable transcription regulator. Promotes histone acetylation during ethylene signaling in an EIN2-dependent manner, thus regulating positively ethylene-responsive genes. This is Trihelix transcription factor ENAP2 from Arabidopsis thaliana (Mouse-ear cress).